Consider the following 466-residue polypeptide: Triplex capsid protein 1 (466 aa).

The tract at residues 1 to 29 (MKTKPLPTAPMAWAESAVETTTGPRELAG) is disordered.

This sequence belongs to the herpesviridae TRX1 protein family. In terms of assembly, interacts with TRX2, MCP and capsid vertex component 2/CVC2.

The protein localises to the virion. The protein resides in the host nucleus. Its function is as follows. Structural component of the T=16 icosahedral capsid. The capsid is composed of pentamers and hexamers of major capsid protein/MCP, which are linked together by heterotrimers called triplexes. These triplexes are formed by a single molecule of triplex protein 1/TRX1 and two copies of triplex protein 2/TRX2. Additionally, TRX1 is required for efficient transport of TRX2 to the nucleus, which is the site of capsid assembly. The protein is Triplex capsid protein 1 of Homo sapiens (Human).